A 147-amino-acid chain; its full sequence is Protein AfaD (147 aa).

Positions 1 to 26 (MNGSIRKMMRVTCGMLLMVMSGVSQA) are cleaved as a signal peptide. The interval 91–111 (RTGGDGWSPVKGEGGKGVSRP) is disordered.

The protein to E.coli AggB.

The chain is Protein AfaD (afaD) from Escherichia coli.